A 204-amino-acid polypeptide reads, in one-letter code: Venom allergen 5 (204 aa).

4 cysteine pairs are disulfide-bonded: cysteine 4-cysteine 17, cysteine 8-cysteine 101, cysteine 26-cysteine 94, and cysteine 170-cysteine 187. An SCP domain is found at 45–189 (LKEHNDFRQK…WHKHYLVCNY (145 aa)).

Belongs to the CRISP family. Venom allergen 5-like subfamily. As to expression, expressed by the venom gland.

The protein resides in the secreted. This chain is Venom allergen 5, found in Vespula pensylvanica (Western yellow jacket).